Consider the following 291-residue polypeptide: 33 kDa chaperonin (291 aa).

2 cysteine pairs are disulfide-bonded: Cys-237/Cys-239 and Cys-270/Cys-273.

Belongs to the HSP33 family. In terms of processing, under oxidizing conditions two disulfide bonds are formed involving the reactive cysteines. Under reducing conditions zinc is bound to the reactive cysteines and the protein is inactive.

Its subcellular location is the cytoplasm. Redox regulated molecular chaperone. Protects both thermally unfolding and oxidatively damaged proteins from irreversible aggregation. Plays an important role in the bacterial defense system toward oxidative stress. This chain is 33 kDa chaperonin, found in Bacillus mycoides (strain KBAB4) (Bacillus weihenstephanensis).